Reading from the N-terminus, the 416-residue chain is Major royal jelly protein 8 (416 aa).

Residues 1–16 form the signal peptide; sequence MIRWLLLMYLGITCQG. 8 N-linked (GlcNAc...) asparagine glycosylation sites follow: Asn24, Asn58, Asn93, Asn115, Asn158, Asn175, Asn196, and Asn215.

It belongs to the major royal jelly protein family. In terms of tissue distribution, expressed at very low levels in the hypopharyngeal glands of worker honey bees (at protein level). Secreted into bee venom in the sting apparatus (at protein level). Expressed in the spermatheca of adult queen bees (at protein level); expression levels are higher in mated queens than in virgin queens. Along with Mrjp9 expressed at very low levels in the head of worker bees compared to other major royal jelly proteins.

The protein localises to the secreted. Its function is as follows. Component of bee sting venom. Component of royal jelly, a substance produced in the hypopharyngeal gland containing proteins, free amino acids, fatty acids, sugars and other nutrients, which is fed to developing larvae by worker nurse bees; may be present only at trace levels. All larvae are fed some royal jelly (also known as worker jelly) early in their development but it forms the principal source of nutrition for larvae destined to become queen bees. Produced in the spermatheca of adult queen bees, along with other major royal jelly proteins, where it may act as a nutrient supply for sperm stored by mated queens, or be involved in energy metabolism. The chain is Major royal jelly protein 8 from Apis mellifera (Honeybee).